A 402-amino-acid polypeptide reads, in one-letter code: 26S proteasome non-ATPase regulatory subunit 4 homolog (402 aa).

Residues 5-189 form the VWFA domain; the sequence is ATMICIDNSE…LSDVLISTPI (185 aa). In terms of domain architecture, UIM 1 spans 221–240; it reads NVDPELALALRLSMEEERAR. Residues 241–261 show a composition bias toward basic and acidic residues; that stretch reads QEAIAKKAAEESSGAENKDHA. Disordered stretches follow at residues 241 to 292 and 302 to 321; these read QEAI…EDDD and MSMEEGSSGAAAADAAMAEA. 2 consecutive UIM domains span residues 291-310 and 323-342; these read DDAQLLQQALAMSMEEGSSG and VDDQDLALALQMSVQDAGGS. The segment at 363 to 402 is disordered; that stretch reads SLPGVDPNDPSVKDLLASLHGQGEQEKKEDKSDKPEDEKK. Positions 385 to 402 are enriched in basic and acidic residues; sequence GEQEKKEDKSDKPEDEKK.

It belongs to the proteasome subunit S5A family. As to quaternary structure, component of the 19S regulatory particle (RP/PA700) base subcomplex of the 26S proteasome. The 26S proteasome is composed of a core protease (CP), known as the 20S proteasome, capped at one or both ends by the 19S regulatory particle (RP/PA700). The RP/PA700 complex is composed of at least 17 different subunits in two subcomplexes, the base and the lid, which form the portions proximal and distal to the 20S proteolytic core, respectively. Interacts with PI4KG4.

Functionally, plays a role in maintaining the structural integrity of the 19S regulatory particle (RP), subcomplex of the 26S proteasome. Plays a major role in both the direct and indirect recognition of ubiquitinated substrates of ubiquitin/26S proteasome-mediated proteolysis (UPP). Binds and presumably selects ubiquitin-conjugates for destruction. This is 26S proteasome non-ATPase regulatory subunit 4 homolog from Oryza sativa subsp. japonica (Rice).